The following is a 55-amino-acid chain: Large ribosomal subunit protein bL33B (55 aa).

The protein belongs to the bacterial ribosomal protein bL33 family.

The polypeptide is Large ribosomal subunit protein bL33B (Salinispora arenicola (strain CNS-205)).